The chain runs to 436 residues: MPCRILTLQSEAQWPLLGDMLAGRYDPDDAVEPVVRDILAAVRSKGDEALAEYTRRFDCPDFTPALLHVTSEEVAQAVASVPADDIAIIRQAADNIRSFHEAQKERSWFVTHDDGTILGQKVTPVDRAGLYVPGGKGGDTPLLSSLLMNAIPAQVAGVTSITVASPPRPDGTLNPHLLAAAHILGITDIIRAGSAWAVAAFAFGTQTIAPVDVIAGPGNIFVTTAKRMVQGRVAIDMIAGPSEILILADATARPDWVAADMLSQAEHDPLASSILVTTEPALAEAVTAELERQLATLPRADIARKALADWGAVVVVPDMDVAVAIANRVAPEHLEVLTAQPWELAGSLRHAGALFLGPYSPEPLGDYFAGPNHVLPTMGTARFSSALSVQTFCKRTSIIAASRAFAERNADAVARLARLEGLEAHARSAASRNSQQ.

3 residues coordinate substrate: serine 242, glutamine 264, and histidine 267. Positions 264 and 267 each coordinate Zn(2+). Catalysis depends on proton acceptor residues glutamate 332 and histidine 333. Residues histidine 333, aspartate 366, glutamate 420, and histidine 425 each contribute to the substrate site. A Zn(2+)-binding site is contributed by aspartate 366. Histidine 425 is a Zn(2+) binding site.

This sequence belongs to the histidinol dehydrogenase family. Zn(2+) serves as cofactor.

The enzyme catalyses L-histidinol + 2 NAD(+) + H2O = L-histidine + 2 NADH + 3 H(+). It participates in amino-acid biosynthesis; L-histidine biosynthesis; L-histidine from 5-phospho-alpha-D-ribose 1-diphosphate: step 9/9. Functionally, catalyzes the sequential NAD-dependent oxidations of L-histidinol to L-histidinaldehyde and then to L-histidine. The chain is Histidinol dehydrogenase from Nitratidesulfovibrio vulgaris (strain ATCC 29579 / DSM 644 / CCUG 34227 / NCIMB 8303 / VKM B-1760 / Hildenborough) (Desulfovibrio vulgaris).